The chain runs to 132 residues: MEKVDEFLEYIKVSILDKSIVDTSLILSDRDGFVLGKIIDKSSSADNVIDNSLISTFSSATDQASKLHAGNNKSIVSFFEDRIIVHINVSNVILSIITDTESNVGLILGSQDDLIRSLTSLSNSIQSDIQDM.

The protein belongs to the LAMTOR3 family. As to quaternary structure, part of the Ragulator complex.

Functionally, regulator of the TOR pathway, a signaling cascade that promotes cell growth in response to growth factors, energy levels, and amino acids. May activate the TOR signaling cascade in response to amino acids. This is Ragulator complex protein LAMTOR3 homolog from Dictyostelium discoideum (Social amoeba).